Here is a 432-residue protein sequence, read N- to C-terminus: MVNVVLGSQWGDEGKGKLVDLLVGEYDIVARSAGGNNAGHTIVVNGVKYDFHMLPSGLVNPNCQNLIGNGVVIHVPSFFEELKSLEAKGLKNAKGRLFISSRAHLVFDFHQRTDKLRELELSGASKDGKNIGTTGKGIGPTYSTKASRSGLRVHHLVNDDPQAWEVFETRYRRLVETRQQRYGSFDYDPEEELQRYKSYREQLKPFVVDSVNFMHDAIKKNKKILVEGANALMLDIDFGTYPYVTSSNTGIGGVITGLGIPPRTIKEVFGVVKAYTTRVGEGPFPTEQLNEDGEKLQNIGAEFGVTTGRKRRCGWLDLVVLKYSNLINGYTSLNITKLDVLDTFKEIKVGVSYSVDGKKLESFPEDLLTLAKVEVEYVTLPGWEEDISKITNYEDLPENAQKYLKFIEDFVEVPIQWVGTGPARDAMVHKEI.

GTP contacts are provided by residues 11-17 (GDEGKGK) and 39-41 (GHT). D12 functions as the Proton acceptor in the catalytic mechanism. Residues D12 and G39 each coordinate Mg(2+). IMP is bound by residues 12–15 (DEGK), 37–40 (NAGH), T134, R148, N230, T245, and R309. Residue H40 is the Proton donor of the active site. Position 305-311 (305-311 (VTTGRKR)) interacts with substrate. Residues R311, 337–339 (KLD), and 419–421 (GTG) each bind GTP.

This sequence belongs to the adenylosuccinate synthetase family. As to quaternary structure, homodimer. Mg(2+) serves as cofactor.

It is found in the cytoplasm. It carries out the reaction IMP + L-aspartate + GTP = N(6)-(1,2-dicarboxyethyl)-AMP + GDP + phosphate + 2 H(+). The protein operates within purine metabolism; AMP biosynthesis via de novo pathway; AMP from IMP: step 1/2. Its function is as follows. Plays an important role in the de novo pathway and in the salvage pathway of purine nucleotide biosynthesis. Catalyzes the first committed step in the biosynthesis of AMP from IMP. The sequence is that of Adenylosuccinate synthetase from Kluyveromyces lactis (strain ATCC 8585 / CBS 2359 / DSM 70799 / NBRC 1267 / NRRL Y-1140 / WM37) (Yeast).